Reading from the N-terminus, the 360-residue chain is Phospho-N-acetylmuramoyl-pentapeptide-transferase (360 aa).

10 helical membrane-spanning segments follow: residues 26–46 (AILA…KLIE), 74–94 (MGGL…GDLG), 97–117 (YVWV…IDDY), 132–152 (WKYI…FYST), 168–188 (ILPQ…VGAS), 199–219 (GLAI…AYLS), 236–256 (SGEL…FLWF), 263–283 (VFMG…IAVL), 288–308 (ILLV…ILQV), and 338–358 (VIVR…ATLK).

It belongs to the glycosyltransferase 4 family. MraY subfamily. Mg(2+) is required as a cofactor.

The protein localises to the cell inner membrane. The enzyme catalyses UDP-N-acetyl-alpha-D-muramoyl-L-alanyl-gamma-D-glutamyl-meso-2,6-diaminopimeloyl-D-alanyl-D-alanine + di-trans,octa-cis-undecaprenyl phosphate = di-trans,octa-cis-undecaprenyl diphospho-N-acetyl-alpha-D-muramoyl-L-alanyl-D-glutamyl-meso-2,6-diaminopimeloyl-D-alanyl-D-alanine + UMP. It functions in the pathway cell wall biogenesis; peptidoglycan biosynthesis. In terms of biological role, catalyzes the initial step of the lipid cycle reactions in the biosynthesis of the cell wall peptidoglycan: transfers peptidoglycan precursor phospho-MurNAc-pentapeptide from UDP-MurNAc-pentapeptide onto the lipid carrier undecaprenyl phosphate, yielding undecaprenyl-pyrophosphoryl-MurNAc-pentapeptide, known as lipid I. The polypeptide is Phospho-N-acetylmuramoyl-pentapeptide-transferase (Shewanella amazonensis (strain ATCC BAA-1098 / SB2B)).